A 252-amino-acid chain; its full sequence is Cell division protein ZapD (252 aa).

The protein belongs to the ZapD family. As to quaternary structure, interacts with FtsZ.

It localises to the cytoplasm. In terms of biological role, cell division factor that enhances FtsZ-ring assembly. Directly interacts with FtsZ and promotes bundling of FtsZ protofilaments, with a reduction in FtsZ GTPase activity. The chain is Cell division protein ZapD from Dechloromonas aromatica (strain RCB).